A 60-amino-acid polypeptide reads, in one-letter code: Large ribosomal subunit protein uL30 (60 aa).

Belongs to the universal ribosomal protein uL30 family. In terms of assembly, part of the 50S ribosomal subunit.

The chain is Large ribosomal subunit protein uL30 from Dehalococcoides mccartyi (strain CBDB1).